We begin with the raw amino-acid sequence, 295 residues long: Phosphatidylserine decarboxylase proenzyme (295 aa).

Catalysis depends on charge relay system; for autoendoproteolytic cleavage activity residues aspartate 113, histidine 169, and serine 256. Serine 256 functions as the Schiff-base intermediate with substrate; via pyruvic acid; for decarboxylase activity in the catalytic mechanism. Serine 256 bears the Pyruvic acid (Ser); by autocatalysis mark.

This sequence belongs to the phosphatidylserine decarboxylase family. PSD-B subfamily. Prokaryotic type II sub-subfamily. Heterodimer of a large membrane-associated beta subunit and a small pyruvoyl-containing alpha subunit. Pyruvate serves as cofactor. In terms of processing, is synthesized initially as an inactive proenzyme. Formation of the active enzyme involves a self-maturation process in which the active site pyruvoyl group is generated from an internal serine residue via an autocatalytic post-translational modification. Two non-identical subunits are generated from the proenzyme in this reaction, and the pyruvate is formed at the N-terminus of the alpha chain, which is derived from the carboxyl end of the proenzyme. The autoendoproteolytic cleavage occurs by a canonical serine protease mechanism, in which the side chain hydroxyl group of the serine supplies its oxygen atom to form the C-terminus of the beta chain, while the remainder of the serine residue undergoes an oxidative deamination to produce ammonia and the pyruvoyl prosthetic group on the alpha chain. During this reaction, the Ser that is part of the protease active site of the proenzyme becomes the pyruvoyl prosthetic group, which constitutes an essential element of the active site of the mature decarboxylase.

The protein localises to the cell membrane. It catalyses the reaction a 1,2-diacyl-sn-glycero-3-phospho-L-serine + H(+) = a 1,2-diacyl-sn-glycero-3-phosphoethanolamine + CO2. The protein operates within phospholipid metabolism; phosphatidylethanolamine biosynthesis; phosphatidylethanolamine from CDP-diacylglycerol: step 2/2. Catalyzes the formation of phosphatidylethanolamine (PtdEtn) from phosphatidylserine (PtdSer). The polypeptide is Phosphatidylserine decarboxylase proenzyme (Clostridium botulinum (strain Kyoto / Type A2)).